Reading from the N-terminus, the 721-residue chain is MKFGEHLSKSLIRQYSYYYISYDDLKTELEDNLSKNNGQWTQELETDFLESLEIELDKVYTFCKVKHSEVFRRVKEVQEQVQHTVRLLDSNNPPTQLDFEILEEELSDIIADVHDLAKFSRLNYTGFQKIIKKHDKKTGFILKPVFQVRLDSKPFFKENYDELVVKISQLYDIARTSGRPIKGDSSAGGKQQNFVRQTTKYWVHPDNITELKLIILKHLPVLVFNTNKEFEREDSAITSIYFDNENLDLYYGRLRKDEGAEAHRLRWYGGMSTDTIFVERKTHREDWTGEKSVKARFALKERHVNDFLKGKYTVDQVFAKMRKEGKKPMNEIENLEALASEIQYVMLKKKLRPVVRSFYNRTAFQLPGDARVRISLDTELTMVREDNFDGVDRTHKNWRRTDIGVDWPFKQLDDKDICRFPYAVLEVKLQTQLGQEPPEWVRELVGSHLVEPVPKFSKFIHGVATLLNDKVDSIPFWLPQMDVDIRKPPLPTNIEITRPGRSDNEDNDFDEDDEDDAALVAAMTNAPGNSLDIEESVGYGATSAPTSNTNHVVESANAAYYQRKIRNAENPISKKYYEIVAFFDHYFNGDQISKIPKGTTFDTQIRAPPGKTICVPVRVEPKVYFATERTYLSWLSISILLGGVSTTLLTYGSPTAMIGSIGFFITSLAVLIRTVMVYAKRVVNIRLKRAVDYEDKIGPGMVSVFLILSILFSFFCNLVAK.

In terms of domain architecture, SPX spans 1–148 (MKFGEHLSKS…GFILKPVFQV (148 aa)). Topologically, residues 1 to 630 (MKFGEHLSKS…PKVYFATERT (630 aa)) are cytoplasmic. Residue lysine 75 forms a Glycyl lysine isopeptide (Lys-Gly) (interchain with G-Cter in ubiquitin) linkage. Residues 126-133 (GFQKIIKK) form an important for inositol polyphosphate binding region. The ATP site is built by lysine 200, arginine 264, arginine 266, lysine 281, lysine 294, tyrosine 359, and arginine 361. Glutamate 426 contributes to the Mn(2+) binding site. The active site involves lysine 458. Residues 489–512 (PLPTNIEITRPGRSDNEDNDFDED) are disordered. 2 consecutive transmembrane segments (helical) span residues 631–651 (YLSWLSISILLGGVSTTLLTY) and 652–672 (GSPTAMIGSIGFFITSLAVLI). Residues 673–699 (RTVMVYAKRVVNIRLKRAVDYEDKIGP) lie on the Cytoplasmic side of the membrane. The chain crosses the membrane as a helical span at residues 700 to 720 (GMVSVFLILSILFSFFCNLVA). Lysine 721 is a topological domain (vacuolar).

It belongs to the VTC4 family. In terms of assembly, the VTC core complex is an integral membrane heterooligomer composed of the catalytic subunit VTC4 and the accessory subunits VTC1, VTC2 and VTC3. The complex exists in 2 different sub-complexes: VTC1-VTC2-VCT4 and VCT1-VTC3-VTC4. The VCT1-VTC3-VTC4 subcomplex is mostly found on the vacuolar membrane. The VTC1-VTC2-VCT4 subcomplex is observed in the cell periphery, probably ER and nuclear envelope, but localizes to the vacuole under phosphate starvation. Each subunit contains 3 transmembrane helices. VTC1 is a small membrane protein without hydrophilic domain. VTC2, VTC3 and VTC4 are related and have 2 hydrophilic domains that face the cytosol, an N-terminal SPX domain and the central core domain. The central core in VTC4 is the catalytic domain, with the essential catalytic lysine replaced by isoleucine and leucine in VTC2 and VTC3, respectively. The core complex associates with the accessory subunit VTC5. The complex interacts with the v-SNARE NYV1 and with the V(0) subunit of V-ATPase VPH1. It depends on Mn(2+) as a cofactor.

The protein localises to the vacuole membrane. It is found in the cytoplasm. It localises to the cell cortex. The protein resides in the endoplasmic reticulum membrane. Its subcellular location is the cytoplasmic vesicle. The protein localises to the autophagosome membrane. It carries out the reaction [phosphate](n) + ATP = [phosphate](n+1) + ADP. With respect to regulation, activity of the enzyme is Mn(2+)-dependent and enhanced in the presence of pyrophosphate (PPi). Catalytic subunit of the vacuolar transporter chaperone (VTC) complex. The VTC complex acts as a vacuolar polyphosphate polymerase that catalyzes the synthesis of inorganic polyphosphate (polyP) via transfer of phosphate from ATP to a growing polyP chain, releasing ADP. VTC exposes its catalytic domain VTC4 to the cytosol, where the growing polyP chain winds through a tunnel-shaped pocket, integrating cytoplasmic polymer synthesis with polyP membrane translocation. The VTC complex carries 9 vacuolar transmembrane domains, which are likely to constitute the translocation channel into the organelle lumen. PolyP synthesis is tightly coupled to its transport into the vacuole lumen, in order to avoid otherwise toxic intermediates in the cytosol, and it depends on the proton gradient across the membrane, formed by V-ATPase. The VTC complex also plays a role in vacuolar membrane fusion. Required for SEC18/NSF activity in SNARE priming, membrane binding of LMA1 and V(0) trans-complex formation. Binds inositol hexakisphosphate (Ins6P) and similar inositol polyphosphates, such as 5-diphospho-inositol pentakisphosphate (5-InsP7); these are important intracellular signaling molecules. Inositol polyphosphate binding promotes vacuolar polyphosphate synthesis. The VTC complex is required for microautophagy. It is a constituent of autophagic tubes and is required for scission of microautophagic vesicles from these tubes. The protein is Vacuolar transporter chaperone complex subunit 4 of Saccharomyces cerevisiae (strain ATCC 204508 / S288c) (Baker's yeast).